A 453-amino-acid polypeptide reads, in one-letter code: tRNA modification GTPase MnmE (453 aa).

(6S)-5-formyl-5,6,7,8-tetrahydrofolate contacts are provided by Arg-22, Glu-79, and Lys-119. Residues 215–376 (GMKVVIAGRP…LKQHLKSLMG (162 aa)) enclose the TrmE-type G domain. Asn-225 contributes to the K(+) binding site. GTP is bound by residues 225–230 (NAGKSS), 244–250 (TEIAGTT), 269–272 (DTAG), and 334–337 (NKAD). A Mg(2+)-binding site is contributed by Ser-229. K(+) contacts are provided by Thr-244, Ile-246, and Thr-249. Residue Thr-250 coordinates Mg(2+). Lys-453 serves as a coordination point for (6S)-5-formyl-5,6,7,8-tetrahydrofolate.

Belongs to the TRAFAC class TrmE-Era-EngA-EngB-Septin-like GTPase superfamily. TrmE GTPase family. As to quaternary structure, homodimer. Heterotetramer of two MnmE and two MnmG subunits. K(+) serves as cofactor.

It is found in the cytoplasm. Its function is as follows. Exhibits a very high intrinsic GTPase hydrolysis rate. Involved in the addition of a carboxymethylaminomethyl (cmnm) group at the wobble position (U34) of certain tRNAs, forming tRNA-cmnm(5)s(2)U34. In Shewanella halifaxensis (strain HAW-EB4), this protein is tRNA modification GTPase MnmE.